A 553-amino-acid chain; its full sequence is Phospholipase B (553 aa).

The first 35 residues, 1-35 (MIRFGNPSSSDKRRQRCRSWYWGGLLLLWAVAETR), serve as a signal peptide directing secretion. N-linked (GlcNAc...) asparagine glycans are attached at residues asparagine 313, asparagine 416, and asparagine 531.

It belongs to the phospholipase B-like family. In terms of tissue distribution, expressed by the venom gland.

It is found in the secreted. In terms of biological role, may cause hemolysis or may be involved in protein folding and translation. The protein is Phospholipase B of Crotalus adamanteus (Eastern diamondback rattlesnake).